We begin with the raw amino-acid sequence, 1139 residues long: MNFCDNNEMNETKNFMMSNKNDDIVVDCDEYIDGNVFEKNTNMGNIYDENYNVDMKNDNLLSKLNDNISFTYTTNGQVEKQENEIKEKQNILHYQIYIDNDEDKYKYCSNSNLHKNEEEHEKGSPNNIYEELDNNLEKKYFYYNSDSKHCIDEKNETNDLENENVVTSMDVSYENVLNDNFIKSRSTSINYTDNSFVLNKENLKSSHHINGYYINDHDNIKSDIINDHDNIKSDIINDYDNIKGDKINEYDNIKSDKINDYDNIKSDIINDYDNIKSDKINDYDNIKSDKINDYDNIKSDKINDYDNIKSDKINDYDNIKSDKINHYDNIKSDKINDYDNIKSDKINDYDNIKSDKINDYDNIKYNDDSQINNNVSNKVNSPDDDPNTYEKDKKDIINCNIYEENKNNMNNIIHNDKENIHMVDTGKNEENNNIDNKNNDDINKVNVLTRVDTENYILNEENILPLHTNDDVTKLLDEINDLKNTIENMKKEKINLLSKFKAYTLNNKKELEELKIKCKNKEEQIKMYENKLQNKEDEIMNYVNEIQNKDKKIESYHIKLHNKEEEIMNYVNEIQNKEEEIIKYVNELQNSDVQKEKKELKTINEVLKNTNEKLEKEITSLLGEMKKIEEENKVLKIFKEEKNKINNEKVTQIKGDDINDDNDMKFKQILLDNKTFNKLLVNELNIVEENILFCFSIDKDKNRLLVCIKQNDDNFFVIPNCIFDEKFPGLQKKTESMIIQDIHEKEILELKNKQMNELYILKKEKEDIYKEYEEYKKKVTSLINETNYNYKNIEEKENEIKELNNTLNKYKEEMNNYKEEIIVINEKYKLLEIELCKEKNIRDQQNVGISDLKKKMLKEKIELEKKYKEQYEKETQQKINDMKIIFDNKEKILQDQIDDLLHKIEKLTFSNDEKTKTIENLQIYMDNDDNIMNQEGIQKNEKKQIIDNPINTDEKDLLNYIPDNHINSDLNHINSNVENDYVEKRNKNNVHLSKKETNYQHNINEQENDNNNNNNNNNNNNNVEKLKSINSTNTSIPIYPYEYKKIRKKLETYEILLNEQQEGKKKMTEEINSLKNQVKNYESINGNYQHIIYQKNILSNFIAQIPSRIQVDDYVSVIFNSFNFSNQEIEAINIKRSKK.

Positions Asn366–Thr388 are disordered. The span at Ser369 to Asn380 shows a compositional bias: polar residues. Coiled coils occupy residues Val472 to Glu648 and Leu758 to Gln877. The segment at Asn1004–Glu1024 is disordered. The segment covering Asp1009 to Asn1022 has biased composition (low complexity). Residues Tyr1043–Ile1084 adopt a coiled-coil conformation. The GRIP domain occupies Ile1084 to Lys1135.

This is GRIP and coiled-coil domain-containing protein from Plasmodium falciparum (isolate 3D7).